The sequence spans 108 residues: Iron-sulfur cluster assembly protein CyaY (108 aa).

It belongs to the frataxin family.

Functionally, involved in iron-sulfur (Fe-S) cluster assembly. May act as a regulator of Fe-S biogenesis. This chain is Iron-sulfur cluster assembly protein CyaY, found in Burkholderia mallei (strain NCTC 10247).